Reading from the N-terminus, the 778-residue chain is MGKQGFGYIFLTIFCTMALKLNCVSSVSVAGLGYVVTAAVVLSAVPVSMVEHAEFSKAGKEPGLQIWRIEKFDLVPVPKNLYGDFFTGDSYLVLNTIRQRSGNLQYDLHFWLGDESSQDERGAAAIFTVQMDDYLQGKAVQHREVQGHESSTFLGYFKSGIKYKAGGVASGFRHVVPNEVTVQRLLQVKGRRTVRATEVPVSWESFNTGDCFILDLGSNIYQWCGSNSNRQERLKATVLAKGIRDNEKNGRAKVFVSEEGAEREEMLQVLGPKPSLPQGASDDTKTDTANRKLAKLYKVSNGAGNMAVSLVADENPFSQAALNTEDCFILDHGTDGKIFVWKGRSANSDERKAALKTATDFIDKMGYPKHTQVQVLPESGETPLFKQFFKNWRDKDQTEGLGEAYISGHVAKIEKVPFDAATLHTSRAMAAQHGMEDDGSGKKQIWRIEGSEKVPVDPATYGQFYGGDSYIILYDYRHAGKQGQIIYTWQGAHSTQDEIATSAFLTVQLDEELGGSPVQKRVVQGKEPPHLMSMFGGKPLIVYKGGTSREGGQTTPAQTRLFQVRSSTSGATRAVELDPAASQLNSNDAFVLKTPSAAYLWVGRGSNSAELSGAQELLKVLGARPVQVSEGREPDNFWVALGGKAPYRTSPRLKDKKMDAYPPRLFACSNKSGRFTIEEVPGDLTQDDLATDDVMILDTWDQVFVWIGKDAQEEEKTEALKSAKRYIETDPASRDKRTPVTLVKQGLEPPTFSGWFLGWDDDYWSVDPLQRAMADVDV.

An N-terminal signal peptide occupies residues 1-23; sequence MGKQGFGYIFLTIFCTMALKLNC. The segment at 49–172 is actin-severing; sequence MVEHAEFSKA…YKAGGVASGF (124 aa). The stretch at 72–154 is one Gelsolin-like 1 repeat; it reads FDLVPVPKNL…VQGHESSTFL (83 aa). 6 residues coordinate Ca(2+): glycine 88, aspartate 89, glutamate 120, aspartate 132, glycine 137, and alanine 139. An actin-actin interfilament contact point region spans residues 119–122; it reads DERG. 158-165 is a binding site for a 1,2-diacyl-sn-glycero-3-phospho-(1D-myo-inositol-4,5-bisphosphate); that stretch reads KSGIKYKA. Valine 168 contributes to the Ca(2+) binding site. Position 184–192 (184–192) interacts with a 1,2-diacyl-sn-glycero-3-phospho-(1D-myo-inositol-4,5-bisphosphate); it reads RLLQVKGRR. A Gelsolin-like 2 repeat occupies 193 to 266; it reads TVRATEVPVS…SEEGAEREEM (74 aa). Residues glycine 209 and aspartate 210 each contribute to the Ca(2+) site. Cysteine 211 and cysteine 224 are oxidised to a cystine. Residues glutamate 232, aspartate 282, glutamate 325, aspartate 326, glutamate 350, glycine 467, aspartate 468, glutamate 498, aspartate 510, glycine 515, proline 517, threonine 547, asparagine 587, aspartate 588, glutamate 610, aspartate 692, aspartate 693, and glutamate 715 each contribute to the Ca(2+) site. Gelsolin-like repeat units follow at residues 313–385 and 451–532; these read DENP…TPLF and SEKV…PHLM. The actin-binding, Ca-sensitive stretch occupies residues 430–778; sequence AAQHGMEDDG…LQRAMADVDV (349 aa). Gelsolin-like repeat units follow at residues 574–638 and 677–752; these read AVEL…DNFW and IEEV…PPTF.

Belongs to the villin/gelsolin family. In terms of assembly, binds to actin and to fibronectin. In terms of tissue distribution, highly expressed in homogene cells of the basilar papilla. Also detected in subcutaneous layer of the skin.

The protein resides in the secreted. It localises to the cytoplasm. Its subcellular location is the cytoskeleton. Its function is as follows. Calcium-regulated, actin-modulating protein that binds to the plus (or barbed) ends of actin monomers or filaments, preventing monomer exchange (end-blocking or capping). It can promote the assembly of monomers into filaments (nucleation) as well as sever filaments already formed. Plays a role in ciliogenesis. The protein is Gelsolin (GSN) of Gallus gallus (Chicken).